The primary structure comprises 255 residues: Ribosomal RNA small subunit methyltransferase A (255 aa).

Residues His12, Leu14, Gly39, Glu60, Asp81, and Asn103 each contribute to the S-adenosyl-L-methionine site.

This sequence belongs to the class I-like SAM-binding methyltransferase superfamily. rRNA adenine N(6)-methyltransferase family. RsmA subfamily.

Its subcellular location is the cytoplasm. It carries out the reaction adenosine(1518)/adenosine(1519) in 16S rRNA + 4 S-adenosyl-L-methionine = N(6)-dimethyladenosine(1518)/N(6)-dimethyladenosine(1519) in 16S rRNA + 4 S-adenosyl-L-homocysteine + 4 H(+). Functionally, specifically dimethylates two adjacent adenosines (A1518 and A1519) in the loop of a conserved hairpin near the 3'-end of 16S rRNA in the 30S particle. May play a critical role in biogenesis of 30S subunits. This Variovorax paradoxus (strain S110) protein is Ribosomal RNA small subunit methyltransferase A.